The following is a 163-amino-acid chain: Putative NOL1/NOP2/Sun domain family member 5B (163 aa).

The active-site Nucleophile is Cys93.

It belongs to the class I-like SAM-binding methyltransferase superfamily. RsmB/NOP family. In terms of tissue distribution, ubiquitous.

This is Putative NOL1/NOP2/Sun domain family member 5B (NSUN5P1) from Homo sapiens (Human).